The following is a 348-amino-acid chain: Casein kinase II subunit alpha (348 aa).

The 286-residue stretch at 55-340 folds into the Protein kinase domain; sequence YEIVRKIGRG…PLEAMEHPFF (286 aa). Residues 61–69 and lysine 84 contribute to the ATP site; that span reads IGRGKFSEV. The active-site Proton acceptor is the aspartate 172.

It belongs to the protein kinase superfamily. Ser/Thr protein kinase family. CK2 subfamily. Tetramer of two alpha and two beta chains.

It localises to the cytoplasm. It carries out the reaction L-seryl-[protein] + ATP = O-phospho-L-seryl-[protein] + ADP + H(+). The enzyme catalyses L-threonyl-[protein] + ATP = O-phospho-L-threonyl-[protein] + ADP + H(+). Casein kinases are operationally defined by their preferential utilization of acidic proteins such as caseins as substrates. The alpha chain contains the catalytic site. This is Casein kinase II subunit alpha from Theileria annulata.